The primary structure comprises 451 residues: Glycine--tRNA ligase (451 aa).

Residues arginine 99 and glutamate 168 each contribute to the substrate site. Residues 200 to 202 (RNE), 210 to 215 (FRTREF), 284 to 285 (EL), and 328 to 331 (GLDR) contribute to the ATP site. 215–219 (FEQME) serves as a coordination point for substrate. 324 to 328 (EPSVG) contacts substrate.

The protein belongs to the class-II aminoacyl-tRNA synthetase family. In terms of assembly, homodimer.

Its subcellular location is the cytoplasm. It catalyses the reaction tRNA(Gly) + glycine + ATP = glycyl-tRNA(Gly) + AMP + diphosphate. Its function is as follows. Catalyzes the attachment of glycine to tRNA(Gly). The sequence is that of Glycine--tRNA ligase from Mycoplasmopsis synoviae (strain 53) (Mycoplasma synoviae).